The sequence spans 59 residues: Venom protein 27.7 (59 aa).

The signal sequence occupies residues 1–29 (MTFITLTIGLSLRTIFLIFIFLPPPHLLA).

It belongs to the non-disulfide-bridged peptide (NDBP) superfamily. In terms of tissue distribution, expressed by the venom gland.

The protein resides in the secreted. This is Venom protein 27.7 from Lychas mucronatus (Chinese swimming scorpion).